The primary structure comprises 406 residues: Cysteine desulfurase (406 aa).

The residue at position 226 (lysine 226) is an N6-(pyridoxal phosphate)lysine. Catalysis depends on cysteine 364, which acts as the Cysteine persulfide intermediate.

This sequence belongs to the class-V pyridoxal-phosphate-dependent aminotransferase family. Csd subfamily. As to quaternary structure, homodimer. Interacts with SufE and the SufBCD complex composed of SufB, SufC and SufD. The interaction with SufE is required to mediate the direct transfer of the sulfur atom from the S-sulfanylcysteine. The cofactor is pyridoxal 5'-phosphate.

It is found in the cytoplasm. The catalysed reaction is (sulfur carrier)-H + L-cysteine = (sulfur carrier)-SH + L-alanine. The enzyme catalyses L-selenocysteine + AH2 = hydrogenselenide + L-alanine + A + H(+). It functions in the pathway cofactor biosynthesis; iron-sulfur cluster biosynthesis. In terms of biological role, cysteine desulfurases mobilize the sulfur from L-cysteine to yield L-alanine, an essential step in sulfur metabolism for biosynthesis of a variety of sulfur-containing biomolecules. Component of the suf operon, which is activated and required under specific conditions such as oxidative stress and iron limitation. Acts as a potent selenocysteine lyase in vitro, that mobilizes selenium from L-selenocysteine. Selenocysteine lyase activity is however unsure in vivo. The polypeptide is Cysteine desulfurase (Escherichia coli O17:K52:H18 (strain UMN026 / ExPEC)).